A 721-amino-acid polypeptide reads, in one-letter code: Ribonucleoside-diphosphate reductase subunit alpha (721 aa).

Substrate contacts are provided by residues threonine 168, serine 184–cysteine 185, glycine 213, asparagine 393–glutamate 397, and proline 595–isoleucine 599. Cysteine 185 and cysteine 422 are oxidised to a cystine. Catalysis depends on asparagine 393, which acts as the Proton acceptor. Catalysis depends on cysteine 395, which acts as the Cysteine radical intermediate. Residue glutamate 397 is the Proton acceptor of the active site.

It belongs to the ribonucleoside diphosphate reductase large chain family. As to quaternary structure, tetramer of two alpha and two beta subunits.

It carries out the reaction a 2'-deoxyribonucleoside 5'-diphosphate + [thioredoxin]-disulfide + H2O = a ribonucleoside 5'-diphosphate + [thioredoxin]-dithiol. Under complex allosteric control mediated by deoxynucleoside triphosphates and ATP binding. The type of nucleotide bound at the specificity site determines substrate preference. It seems probable that ATP makes the enzyme reduce CDP and UDP, dGTP favors ADP reduction and dTTP favors GDP reduction. Provides the precursors necessary for DNA synthesis. Catalyzes the biosynthesis of deoxyribonucleotides from the corresponding ribonucleotides. The protein is Ribonucleoside-diphosphate reductase subunit alpha (nrdE) of Mycobacterium leprae (strain TN).